A 1897-amino-acid polypeptide reads, in one-letter code: uncharacterized protein (1897 aa).

In terms of domain architecture, Peptidase S74 spans 1661 to 1888 (SDERVKTNIR…AKVISLESRL (228 aa)). The stretch at 1865–1894 (AALQEIDRQLQLEKAKVISLESRLSALELK) forms a coiled coil.

This is an uncharacterized protein from Micromonas pusilla (Picoplanktonic green alga).